The chain runs to 537 residues: Chaperonin GroEL 1 (537 aa).

ATP-binding positions include 29–32, 86–90, Gly413, and Asp494; these read TLGP and DGTTT.

This sequence belongs to the chaperonin (HSP60) family. Forms a cylinder of 14 subunits composed of two heptameric rings stacked back-to-back. Interacts with the co-chaperonin GroES.

It is found in the cytoplasm. The enzyme catalyses ATP + H2O + a folded polypeptide = ADP + phosphate + an unfolded polypeptide.. Its function is as follows. Together with its co-chaperonin GroES, plays an essential role in assisting protein folding. The GroEL-GroES system forms a nano-cage that allows encapsulation of the non-native substrate proteins and provides a physical environment optimized to promote and accelerate protein folding. This chain is Chaperonin GroEL 1, found in Mycobacterium leprae (strain TN).